A 462-amino-acid chain; its full sequence is Succinate semialdehyde dehydrogenase [NAD(P)+] Sad (462 aa).

Residues 136–137 (WN), 160–163 (KHAP), and 212–213 (GS) each bind NADP(+). Residue E234 is the Proton acceptor of the active site. Residue L235 participates in NADP(+) binding. C268 (nucleophile) is an active-site residue. Residue E365 coordinates NADP(+).

This sequence belongs to the aldehyde dehydrogenase family. Homodimer.

It catalyses the reaction succinate semialdehyde + NAD(+) + H2O = succinate + NADH + 2 H(+). The catalysed reaction is succinate semialdehyde + NADP(+) + H2O = succinate + NADPH + 2 H(+). It functions in the pathway amino-acid degradation; 4-aminobutanoate degradation. Catalyzes the NAD(+)-dependent oxidation of succinate semialdehyde to succinate. It acts preferentially with NAD as cosubstrate but can also use NADP. Prevents the toxic accumulation of succinate semialdehyde (SSA) and plays an important role when arginine and putrescine are used as the sole nitrogen or carbon sources. This is Succinate semialdehyde dehydrogenase [NAD(P)+] Sad (sad) from Escherichia coli (strain K12).